Reading from the N-terminus, the 492-residue chain is 2,3-bisphosphoglycerate-independent phosphoglycerate mutase (492 aa).

Residues D11 and S61 each contribute to the Mn(2+) site. Residue S61 is the Phosphoserine intermediate of the active site. Substrate is bound by residues H118, 147–148 (RD), R178, R184, 248–251 (RNDR), and K320. Residues D386, H390, D427, H428, and H445 each coordinate Mn(2+).

It belongs to the BPG-independent phosphoglycerate mutase family. As to quaternary structure, monomer. The cofactor is Mn(2+).

The enzyme catalyses (2R)-2-phosphoglycerate = (2R)-3-phosphoglycerate. It functions in the pathway carbohydrate degradation; glycolysis; pyruvate from D-glyceraldehyde 3-phosphate: step 3/5. Its function is as follows. Catalyzes the interconversion of 2-phosphoglycerate and 3-phosphoglycerate. The protein is 2,3-bisphosphoglycerate-independent phosphoglycerate mutase of Campylobacter jejuni subsp. jejuni serotype O:23/36 (strain 81-176).